Here is a 272-residue protein sequence, read N- to C-terminus: Bis(5'-nucleosyl)-tetraphosphatase, symmetrical (272 aa).

This sequence belongs to the Ap4A hydrolase family.

The catalysed reaction is P(1),P(4)-bis(5'-adenosyl) tetraphosphate + H2O = 2 ADP + 2 H(+). Its function is as follows. Hydrolyzes diadenosine 5',5'''-P1,P4-tetraphosphate to yield ADP. The chain is Bis(5'-nucleosyl)-tetraphosphatase, symmetrical from Chromohalobacter salexigens (strain ATCC BAA-138 / DSM 3043 / CIP 106854 / NCIMB 13768 / 1H11).